We begin with the raw amino-acid sequence, 282 residues long: Shikimate dehydrogenase (NADP(+)) (282 aa).

Residues 24–26 (SRS) and Thr-71 each bind shikimate. Catalysis depends on Lys-75, which acts as the Proton acceptor. Asp-87 lines the NADP(+) pocket. The shikimate site is built by Asn-96 and Asp-112. NADP(+) is bound by residues 138-142 (GAGGA), 162-167 (NRTRIR), and Leu-227. A shikimate-binding site is contributed by Tyr-229. Position 250 (Gly-250) interacts with NADP(+).

It belongs to the shikimate dehydrogenase family. Homodimer.

It catalyses the reaction shikimate + NADP(+) = 3-dehydroshikimate + NADPH + H(+). It participates in metabolic intermediate biosynthesis; chorismate biosynthesis; chorismate from D-erythrose 4-phosphate and phosphoenolpyruvate: step 4/7. Its function is as follows. Involved in the biosynthesis of the chorismate, which leads to the biosynthesis of aromatic amino acids. Catalyzes the reversible NADPH linked reduction of 3-dehydroshikimate (DHSA) to yield shikimate (SA). This is Shikimate dehydrogenase (NADP(+)) from Paracoccus denitrificans (strain Pd 1222).